Reading from the N-terminus, the 506-residue chain is Zinc finger and SCAN domain containing protein 4D (506 aa).

Residues 37 to 119 (SAQLNFSPSN…RFMESLTDEC (83 aa)) form the SCAN box domain. A disordered region spans residues 238-264 (SQGNSSHHVDFRSAPTPADVPMEEQPK). C2H2-type zinc fingers lie at residues 395–417 (FKCEECSRMFKHARSLSSHQRTH), 424–446 (LLCVTCQKMFKRVSDRRTHEIIH), 452–474 (FKCSTCEKSFSHKTNLKSHEMIH), and 480–503 (YVCSLCSRRFRQSSTYHRHLRNYH).

In terms of tissue distribution, highly expressed at the 2-cell stage but its expression is rapidly turned off.

The protein localises to the nucleus. It localises to the chromosome. Its subcellular location is the telomere. Its function is as follows. Transcription factor required to regulate early development. Binds telomeres and plays a key role in genomic stability by regulating telomere elongation. Acts as an activator of spontaneous telomere sister chromatid exchange (T-SCE) and telomere elongation. This Mus musculus (Mouse) protein is Zinc finger and SCAN domain containing protein 4D (Zscan4d).